A 262-amino-acid chain; its full sequence is Malonyl-[acyl-carrier protein] O-methyltransferase (262 aa).

The protein belongs to the methyltransferase superfamily.

The enzyme catalyses malonyl-[ACP] + S-adenosyl-L-methionine = malonyl-[ACP] methyl ester + S-adenosyl-L-homocysteine. The protein operates within cofactor biosynthesis; biotin biosynthesis. In terms of biological role, converts the free carboxyl group of a malonyl-thioester to its methyl ester by transfer of a methyl group from S-adenosyl-L-methionine (SAM). It allows to synthesize pimeloyl-ACP via the fatty acid synthetic pathway. The polypeptide is Malonyl-[acyl-carrier protein] O-methyltransferase (Dechloromonas aromatica (strain RCB)).